The chain runs to 395 residues: Elongation factor Tu (395 aa).

A tr-type G domain is found at 10 to 204; the sequence is KPHLNIGTIG…AVDNWIEEPV (195 aa). Positions 19–26 are G1; sequence GHVDHGKT. Position 19–26 (19–26) interacts with GTP; sequence GHVDHGKT. Threonine 26 contributes to the Mg(2+) binding site. Residues 60-64 are G2; it reads GITIN. Residues 81–84 form a G3 region; that stretch reads DCPG. Residues 81-85 and 136-139 each bind GTP; these read DCPGH and NKVD. Residues 136–139 form a G4 region; sequence NKVD. Positions 174–176 are G5; that stretch reads SAL.

It belongs to the TRAFAC class translation factor GTPase superfamily. Classic translation factor GTPase family. EF-Tu/EF-1A subfamily. As to quaternary structure, monomer.

The protein resides in the cytoplasm. It catalyses the reaction GTP + H2O = GDP + phosphate + H(+). In terms of biological role, GTP hydrolase that promotes the GTP-dependent binding of aminoacyl-tRNA to the A-site of ribosomes during protein biosynthesis. The polypeptide is Elongation factor Tu (Flavobacterium johnsoniae (strain ATCC 17061 / DSM 2064 / JCM 8514 / BCRC 14874 / CCUG 350202 / NBRC 14942 / NCIMB 11054 / UW101) (Cytophaga johnsonae)).